We begin with the raw amino-acid sequence, 349 residues long: Holliday junction branch migration complex subunit RuvB (349 aa).

Residues 1 to 183 (MTDPSRLVTP…FGIPIRLNFY (183 aa)) are large ATPase domain (RuvB-L). Residues L22, R23, G64, K67, T68, T69, 130–132 (EDF), R173, Y183, and R220 each bind ATP. T68 provides a ligand contact to Mg(2+). Positions 184–254 (TIEELESIVT…IADHALGALE (71 aa)) are small ATPAse domain (RuvB-S). The tract at residues 257-349 (SAGLDAMDRR…GLFGDTGDQE (93 aa)) is head domain (RuvB-H). DNA-binding residues include R293, R312, and R317.

This sequence belongs to the RuvB family. Homohexamer. Forms an RuvA(8)-RuvB(12)-Holliday junction (HJ) complex. HJ DNA is sandwiched between 2 RuvA tetramers; dsDNA enters through RuvA and exits via RuvB. An RuvB hexamer assembles on each DNA strand where it exits the tetramer. Each RuvB hexamer is contacted by two RuvA subunits (via domain III) on 2 adjacent RuvB subunits; this complex drives branch migration. In the full resolvosome a probable DNA-RuvA(4)-RuvB(12)-RuvC(2) complex forms which resolves the HJ.

The protein localises to the cytoplasm. It catalyses the reaction ATP + H2O = ADP + phosphate + H(+). In terms of biological role, the RuvA-RuvB-RuvC complex processes Holliday junction (HJ) DNA during genetic recombination and DNA repair, while the RuvA-RuvB complex plays an important role in the rescue of blocked DNA replication forks via replication fork reversal (RFR). RuvA specifically binds to HJ cruciform DNA, conferring on it an open structure. The RuvB hexamer acts as an ATP-dependent pump, pulling dsDNA into and through the RuvAB complex. RuvB forms 2 homohexamers on either side of HJ DNA bound by 1 or 2 RuvA tetramers; 4 subunits per hexamer contact DNA at a time. Coordinated motions by a converter formed by DNA-disengaged RuvB subunits stimulates ATP hydrolysis and nucleotide exchange. Immobilization of the converter enables RuvB to convert the ATP-contained energy into a lever motion, pulling 2 nucleotides of DNA out of the RuvA tetramer per ATP hydrolyzed, thus driving DNA branch migration. The RuvB motors rotate together with the DNA substrate, which together with the progressing nucleotide cycle form the mechanistic basis for DNA recombination by continuous HJ branch migration. Branch migration allows RuvC to scan DNA until it finds its consensus sequence, where it cleaves and resolves cruciform DNA. The sequence is that of Holliday junction branch migration complex subunit RuvB from Rhodopseudomonas palustris (strain ATCC BAA-98 / CGA009).